The primary structure comprises 118 residues: MASQSQGIQQLLQAEKRAAEKVADARKRKARRLKQAKEEAQMEVEQYRREREHEFQSKQQAAMGSQGNLSAEVEQATRRQVQGMQSSQQRNRERVLAQLLGMVCDVRPQVHPNYRISA.

A disordered region spans residues 25 to 90 (ARKRKARRLK…VQGMQSSQQR (66 aa)). Basic and acidic residues predominate over residues 35–56 (QAKEEAQMEVEQYRREREHEFQ). Polar residues-rich tracts occupy residues 57–69 (SKQQAAMGSQGNL) and 78–89 (RRQVQGMQSSQQ).

Belongs to the V-ATPase G subunit family. As to quaternary structure, V-ATPase is a heteromultimeric enzyme made up of two complexes: the ATP-hydrolytic V1 complex and the proton translocation V0 complex. The V1 complex consists of three catalytic AB heterodimers that form a heterohexamer, three peripheral stalks each consisting of EG heterodimers, one central rotor including subunits D and F, and the regulatory subunits C and H. The proton translocation complex V0 consists of the proton transport subunit a, a ring of proteolipid subunits c9c'', rotary subunit d, subunits e and f, and the accessory subunits ATP6AP1/Ac45 and ATP6AP2/PRR. As to expression, brain.

It is found in the melanosome. Its subcellular location is the cytoplasmic vesicle. It localises to the clathrin-coated vesicle membrane. Subunit of the V1 complex of vacuolar(H+)-ATPase (V-ATPase), a multisubunit enzyme composed of a peripheral complex (V1) that hydrolyzes ATP and a membrane integral complex (V0) that translocates protons. V-ATPase is responsible for acidifying and maintaining the pH of intracellular compartments and in some cell types, is targeted to the plasma membrane, where it is responsible for acidifying the extracellular environment. This Homo sapiens (Human) protein is V-type proton ATPase subunit G 2 (ATP6V1G2).